The chain runs to 524 residues: L-lactate permease (524 aa).

13 helical membrane-spanning segments follow: residues 12–34 (LAVSAFVAAIPILLLLLCLTVFK), 38–60 (IQAALLTLLVTFFIAGLVFHLPF), 67–89 (IVQGVVQGLWPIGYIIVMAVWLY), 127–149 (LEGAAGFGVPIAICAVLLVSLGF), 156–178 (MLCLIANGASGAFGAIGIPVGII), 193–215 (SMMTALTLPMINFTIPFLLIWLM), 224–246 (ILPAILVTSSVYTVSQALITIFI), 250–267 (LADIIPSLLTMGLLALFL), 297–319 (WSPFYLLTMFVFLWSLPAFKGLL), 339–361 (IEVGVDFIGATGTAILLAAVTTV), 374–396 (SLLKKVIVDFSIPIMMICAIIGI), 411–433 (EAVATTGAFFPFLSPILGWIGVF), and 505–522 (YSFGLLVFVSVWTYILSL).

The protein belongs to the lactate permease family.

It localises to the cell membrane. May play a role in L-lactate transport. The chain is L-lactate permease (lctP) from Halalkalibacterium halodurans (strain ATCC BAA-125 / DSM 18197 / FERM 7344 / JCM 9153 / C-125) (Bacillus halodurans).